Reading from the N-terminus, the 272-residue chain is Alcohol dehydrogenase-related 31 kDa protein (272 aa).

Tyr11 to Leu34 contributes to the NAD(+) binding site. Ser139 contributes to the substrate binding site. The Proton acceptor role is filled by Tyr152.

The protein belongs to the short-chain dehydrogenases/reductases (SDR) family.

The sequence is that of Alcohol dehydrogenase-related 31 kDa protein (Adhr) from Drosophila mauritiana (Fruit fly).